The sequence spans 267 residues: MADS-box transcription factor 15 (267 aa).

The MADS-box domain maps to 1–61 (MGRGKVQLKR…GKLYEYATDS (61 aa)). Residues 88–178 (EGNWCHEYRK…QKELVERQKN (91 aa)) form the K-box domain. Residues 179 to 215 (VRGQQQVGQWDQTQVQAQAQAQPQAQTSSSSSSMLRD) are disordered. Residues 182–215 (QQQVGQWDQTQVQAQAQAQPQAQTSSSSSSMLRD) are compositionally biased toward low complexity.

In terms of assembly, may interact with the K-box of MADS1 and MADS6.

The protein localises to the nucleus. Probable transcription factor. The sequence is that of MADS-box transcription factor 15 (MADS15) from Oryza sativa subsp. japonica (Rice).